The primary structure comprises 323 residues: Breast cancer metastasis-suppressor 1-like protein-A (323 aa).

Residues 1-15 (MPVHSREKKESNHEE) are compositionally biased toward basic and acidic residues. The interval 1–52 (MPVHSREKKESNHEEMEVDFAEQEGSSSEDEDTESSSVSEDGESSEMDDEDC) is disordered. The span at 16–51 (MEVDFAEQEGSSSEDEDTESSSVSEDGESSEMDDED) shows a compositional bias: acidic residues. Coiled coils occupy residues 50-81 (EDCERRRMECIDEMTNLEKQFTDLKDQLYKER) and 156-178 (QTELEEKIRRLEEDRHSIDITSE).

It belongs to the BRMS1 family.

The protein localises to the nucleus. In terms of biological role, involved in the histone deacetylase (HDAC1)-dependent transcriptional repression activity. In Danio rerio (Zebrafish), this protein is Breast cancer metastasis-suppressor 1-like protein-A (brms1la).